The sequence spans 266 residues: rRNA adenine N-6-methyltransferase (266 aa).

Positions 14, 16, 41, 62, 87, and 103 each coordinate S-adenosyl-L-methionine.

This sequence belongs to the class I-like SAM-binding methyltransferase superfamily. rRNA adenine N(6)-methyltransferase family.

In terms of biological role, involved in erythromycin resistance. The polypeptide is rRNA adenine N-6-methyltransferase (ermF) (Bacteroides fragilis).